The following is a 69-amino-acid chain: Putative membrane protein insertion efficiency factor (69 aa).

This sequence belongs to the UPF0161 family.

Its subcellular location is the cell inner membrane. Functionally, could be involved in insertion of integral membrane proteins into the membrane. This is Putative membrane protein insertion efficiency factor from Dechloromonas aromatica (strain RCB).